The chain runs to 930 residues: Isoleucine--tRNA ligase (930 aa).

Positions 57 to 67 match the 'HIGH' region motif; that stretch reads PYANGNIHVGH. Glu554 serves as a coordination point for L-isoleucyl-5'-AMP. The 'KMSKS' region motif lies at 595–599; that stretch reads KMSKS. ATP is bound at residue Lys598. Zn(2+)-binding residues include Cys888, Cys891, Cys908, and Cys911.

This sequence belongs to the class-I aminoacyl-tRNA synthetase family. IleS type 1 subfamily. Monomer. Requires Zn(2+) as cofactor.

The protein resides in the cytoplasm. The catalysed reaction is tRNA(Ile) + L-isoleucine + ATP = L-isoleucyl-tRNA(Ile) + AMP + diphosphate. Its function is as follows. Catalyzes the attachment of isoleucine to tRNA(Ile). As IleRS can inadvertently accommodate and process structurally similar amino acids such as valine, to avoid such errors it has two additional distinct tRNA(Ile)-dependent editing activities. One activity is designated as 'pretransfer' editing and involves the hydrolysis of activated Val-AMP. The other activity is designated 'posttransfer' editing and involves deacylation of mischarged Val-tRNA(Ile). The chain is Isoleucine--tRNA ligase from Streptococcus pneumoniae (strain ATCC BAA-255 / R6).